The following is a 427-amino-acid chain: Tol-Pal system protein TolB (427 aa).

The first 23 residues, 1–23 (MKLIARLMSMCAVLFFAINSAYA), serve as a signal peptide directing secretion.

The protein belongs to the TolB family. The Tol-Pal system is composed of five core proteins: the inner membrane proteins TolA, TolQ and TolR, the periplasmic protein TolB and the outer membrane protein Pal. They form a network linking the inner and outer membranes and the peptidoglycan layer.

Its subcellular location is the periplasm. Functionally, part of the Tol-Pal system, which plays a role in outer membrane invagination during cell division and is important for maintaining outer membrane integrity. This Actinobacillus succinogenes (strain ATCC 55618 / DSM 22257 / CCUG 43843 / 130Z) protein is Tol-Pal system protein TolB.